Consider the following 154-residue polypeptide: Large ribosomal subunit protein uL23z (154 aa).

This sequence belongs to the universal ribosomal protein uL23 family.

In terms of biological role, binds to a specific region on the 26S rRNA. The protein is Large ribosomal subunit protein uL23z (RPL23AA) of Arabidopsis thaliana (Mouse-ear cress).